Consider the following 337-residue polypeptide: Major envelope glycoprotein (337 aa).

Residues N76, N114, N271, and N301 are each glycosylated (N-linked (GlcNAc...) asparagine; by host).

The protein belongs to the baculoviridae gp64 family. Post-translationally, palmitoylated.

It is found in the virion membrane. The protein resides in the host cell membrane. Functionally, envelope phosphoglycoprotein which mediates the fusion of viral and host endosomal membranes leading to virus entry into the host cell. The sequence is that of Major envelope glycoprotein (GP67) from Lepidoptera (butterflies and moths).